We begin with the raw amino-acid sequence, 473 residues long: Cell division protein FtsP (473 aa).

A signal peptide (tat-type signal) is located at residues 1–27; the sequence is MSFSRRQFLQASGLAVCLGSLSSSVRA.

Belongs to the FtsP family. In terms of processing, predicted to be exported by the Tat system. The position of the signal peptide cleavage has not been experimentally proven.

It is found in the periplasm. Cell division protein that is required for growth during stress conditions. May be involved in protecting or stabilizing the divisomal assembly under conditions of stress. This Proteus mirabilis (strain HI4320) protein is Cell division protein FtsP.